A 517-amino-acid polypeptide reads, in one-letter code: uncharacterized protein (517 aa).

Disordered stretches follow at residues 16–148 (KDES…TITK), 156–175 (VNKE…NTTT), and 216–351 (KLEK…EENE). Over residues 48-75 (NNNNNNNNTTTTNNNTNNSNTSTSNNSK) the composition is skewed to low complexity. The span at 84–112 (FDDDDDDGDEEDEEEEDDDDDDDDDDDET) shows a compositional bias: acidic residues. A compositionally biased stretch (pro residues) spans 127–143 (QPQPQPQPQPQPQPPIK). Positions 236-252 (VSSTLSNSFDPNIIHNQ) are enriched in polar residues. The span at 254-266 (SPPPPPISIPIPL) shows a compositional bias: pro residues. Composition is skewed to low complexity over residues 271-320 (NLNN…NSNI) and 327-347 (SSSM…SNNN). The stretch at 340–452 (DNSSSNNNEE…HQNQQNSMNN (113 aa)) forms a coiled coil.

The protein belongs to the ENTR1 family.

This is an uncharacterized protein from Dictyostelium discoideum (Social amoeba).